The primary structure comprises 51 residues: UPF0337 protein NE0131 (51 aa).

This sequence belongs to the UPF0337 (CsbD) family.

The sequence is that of UPF0337 protein NE0131 from Nitrosomonas europaea (strain ATCC 19718 / CIP 103999 / KCTC 2705 / NBRC 14298).